Consider the following 133-residue polypeptide: Phosphoribosyl-AMP cyclohydrolase (133 aa).

Residue D82 coordinates Mg(2+). A Zn(2+)-binding site is contributed by C83. Residues D84 and D86 each coordinate Mg(2+). C100 and C107 together coordinate Zn(2+).

The protein belongs to the PRA-CH family. Homodimer. Mg(2+) is required as a cofactor. The cofactor is Zn(2+).

It is found in the cytoplasm. The enzyme catalyses 1-(5-phospho-beta-D-ribosyl)-5'-AMP + H2O = 1-(5-phospho-beta-D-ribosyl)-5-[(5-phospho-beta-D-ribosylamino)methylideneamino]imidazole-4-carboxamide. It participates in amino-acid biosynthesis; L-histidine biosynthesis; L-histidine from 5-phospho-alpha-D-ribose 1-diphosphate: step 3/9. Catalyzes the hydrolysis of the adenine ring of phosphoribosyl-AMP. The polypeptide is Phosphoribosyl-AMP cyclohydrolase (Aromatoleum aromaticum (strain DSM 19018 / LMG 30748 / EbN1) (Azoarcus sp. (strain EbN1))).